A 172-amino-acid chain; its full sequence is Myosin regulatory light chain 2, smooth muscle minor isoform (172 aa).

At Ser2 the chain carries N-acetylserine. Thr19 is modified (phosphothreonine; by MLCK). Ser20 bears the Phosphoserine; by MLCK mark. 3 EF-hand domains span residues 29–64 (SQIQEFKEAFNMIDQNRDGFIDKEDLHDMLASLGKN), 98–133 (DPEDVIRNAFACFDEEATGFIQEDYLRELLTTMGDR), and 134–169 (FTDEEVDELYREAPIDKKGNFNYIEFTRILKHGAKD). Ca(2+)-binding residues include Asp42, Asn44, Asp46, and Asp53.

Myosin is a hexamer of 2 heavy chains and 4 light chains. Phosphorylation increases the actin-activated myosin ATPase activity and thereby regulates the contractile activity.

In terms of biological role, myosin regulatory subunit that plays an important role in regulation of both smooth muscle and nonmuscle cell contractile activity. Implicated in cytokinesis, receptor capping, and cell locomotion. This Gallus gallus (Chicken) protein is Myosin regulatory light chain 2, smooth muscle minor isoform.